Here is an 843-residue protein sequence, read N- to C-terminus: Protein translocase subunit SecA (843 aa).

ATP contacts are provided by residues Q85, 103–107 (GEGKT), and D490. Residues 799–834 (KNAVENRSDDSLPKQPVKAEPRVGRNDPCPCGSGKK) are disordered. Residues 802–823 (VENRSDDSLPKQPVKAEPRVGR) show a composition bias toward basic and acidic residues. The Zn(2+) site is built by C827, C829, C838, and C839.

This sequence belongs to the SecA family. As to quaternary structure, monomer and homodimer. Part of the essential Sec protein translocation apparatus which comprises SecA, SecYEG and auxiliary proteins SecDF. Other proteins may also be involved. Zn(2+) serves as cofactor.

The protein resides in the cell membrane. It is found in the cytoplasm. The enzyme catalyses ATP + H2O + cellular proteinSide 1 = ADP + phosphate + cellular proteinSide 2.. Its function is as follows. Part of the Sec protein translocase complex. Interacts with the SecYEG preprotein conducting channel. Has a central role in coupling the hydrolysis of ATP to the transfer of proteins into and across the cell membrane, serving as an ATP-driven molecular motor driving the stepwise translocation of polypeptide chains across the membrane. The sequence is that of Protein translocase subunit SecA from Heliobacterium modesticaldum (strain ATCC 51547 / Ice1).